Here is a 244-residue protein sequence, read N- to C-terminus: Flagellar brake protein YcgR (244 aa).

The region spanning 112-230 is the PilZ domain; sequence QRREYFRIGA…ERELQRIIFS (119 aa).

The protein belongs to the YcgR family. Monomer. Interacts with the flagellar basal bodies.

The protein localises to the bacterial flagellum basal body. Its function is as follows. Acts as a flagellar brake, regulating swimming and swarming in a bis-(3'-5') cyclic diguanylic acid (c-di-GMP)-dependent manner. Overexpression of this gene decreases swimming and swarming motility; those cells that are motile turn predominantly counterclockwise. The D-118 mutant is still able to bind FliM but no longer affects motility upon overexpression. Binds 1 c-di-GMP dimer per subunit. This Salmonella typhimurium (strain LT2 / SGSC1412 / ATCC 700720) protein is Flagellar brake protein YcgR (ycgR).